The following is a 536-amino-acid chain: T-complex protein 1 subunit delta (536 aa).

The tract at residues 1-21 is disordered; it reads MAAVAAPMASKPRGSKAESFV.

The protein belongs to the TCP-1 chaperonin family. Heterooligomeric complex of about 850 to 900 kDa that forms two stacked rings, 12 to 16 nm in diameter.

Its subcellular location is the cytoplasm. In terms of biological role, molecular chaperone; assists the folding of proteins upon ATP hydrolysis. Known to play a role, in vitro, in the folding of actin and tubulin. The protein is T-complex protein 1 subunit delta of Arabidopsis thaliana (Mouse-ear cress).